The sequence spans 3003 residues: MAX gene-associated protein (3003 aa).

Residues lysine 4 and lysine 178 each participate in a glycyl lysine isopeptide (Lys-Gly) (interchain with G-Cter in SUMO2) cross-link. A DNA-binding region (T-box) is located at residues 84 to 260 (MWNEFHNRST…YNPFAKGFRD (177 aa)). Positions 259–277 (RDDGLSSKPQREGKQRNSS) are enriched in basic and acidic residues. Residues 259–290 (RDDGLSSKPQREGKQRNSSDQEGNSVSSSPAH) are disordered. A compositionally biased stretch (polar residues) spans 278–288 (DQEGNSVSSSP). Residues lysine 323, lysine 329, lysine 348, lysine 431, lysine 458, lysine 463, and lysine 480 each participate in a glycyl lysine isopeptide (Lys-Gly) (interchain with G-Cter in SUMO2) cross-link. Phosphoserine is present on serine 531. The interval 553–647 (ILDNSSTERI…NIPVGPGSTF (95 aa)) is disordered. Lysine 567 participates in a covalent cross-link: Glycyl lysine isopeptide (Lys-Gly) (interchain with G-Cter in SUMO2). Polar residues predominate over residues 595 to 607 (KTVTASHSASPNT). Serine 604 is subject to Phosphoserine. Glycyl lysine isopeptide (Lys-Gly) (interchain with G-Cter in SUMO2) cross-links involve residues lysine 610, lysine 651, lysine 782, lysine 788, lysine 814, and lysine 823. Over residues 610 to 621 (KRGRPRKLRLSK) the composition is skewed to basic residues. Residue serine 848 is modified to Phosphoserine. A compositionally biased stretch (polar residues) spans 871 to 913 (KQSTISPSTSHSVKPQSVTTASRKTKAQNKQTTLSGRTKSSYK). 2 disordered regions span residues 871–946 (KQST…TSDN) and 967–987 (LRQA…GLSK). Serine 921 carries the phosphoserine modification. Lysine 925 participates in a covalent cross-link: Glycyl lysine isopeptide (Lys-Gly) (interchain with G-Cter in SUMO2). Positions 937–946 (KNSLSSTSDN) are enriched in polar residues. The span at 969 to 978 (QAQQQHLQQQ) shows a compositional bias: low complexity. Glycyl lysine isopeptide (Lys-Gly) (interchain with G-Cter in SUMO2) cross-links involve residues lysine 987 and lysine 1088. A disordered region spans residues 1111 to 1130 (LGEEGREGGGVREDEEQLKE). Residues 1113–1122 (EEGREGGGVR) are compositionally biased toward basic and acidic residues. Residues lysine 1136, lysine 1158, lysine 1194, and lysine 1202 each participate in a glycyl lysine isopeptide (Lys-Gly) (interchain with G-Cter in SUMO2) cross-link. Disordered regions lie at residues 1186–1215 (QPDL…NPVI), 1246–1277 (QRQL…TKEL), 1297–1323 (SQEK…RSPG), and 1376–1424 (RGEK…DISP). 2 stretches are compositionally biased toward low complexity: residues 1248 to 1269 (QLSP…YSSP) and 1303 to 1315 (KSSC…SSTS). Phosphoserine occurs at positions 1423 and 1450. Residues lysine 1454 and lysine 1495 each participate in a glycyl lysine isopeptide (Lys-Gly) (interchain with G-Cter in SUMO2) cross-link. Disordered stretches follow at residues 1476–1508 (AKVA…RSGK), 1722–1746 (PPVS…SNNV), 1856–1885 (ISPP…PVGT), 1920–1954 (IKKE…KALD), 1964–1983 (SGII…GGDL), and 1988–2038 (TLRE…AGSK). Composition is skewed to polar residues over residues 1488 to 1507 (LPST…NRSG), 1735 to 1746 (PVTTPQISSNNV), and 1859 to 1880 (PETQ…STGG). Residues lysine 1937 and lysine 1944 each participate in a glycyl lysine isopeptide (Lys-Gly) (interchain with G-Cter in SUMO2) cross-link. The span at 1964–1976 (SGIIASENTSNNS) shows a compositional bias: polar residues. Glycyl lysine isopeptide (Lys-Gly) (interchain with G-Cter in SUMO2) cross-links involve residues lysine 2060 and lysine 2084. The tract at residues 2087-2110 (LSGNQVKEQQSNSQAEAKKDCEDS) is disordered. The span at 2088–2101 (SGNQVKEQQSNSQA) shows a compositional bias: polar residues. Glycyl lysine isopeptide (Lys-Gly) (interchain with G-Cter in SUMO2) cross-links involve residues lysine 2104, lysine 2152, and lysine 2179. The residue at position 2206 (arginine 2206) is an Omega-N-methylarginine. Residues 2207-2255 (GSRHFQGHLLLPREQMKPKQQTKDGRSSAADFTVLDLEDEDEEDEKTDD) form a disordered region. Residues 2220-2232 (EQMKPKQQTKDGR) are compositionally biased toward basic and acidic residues. Lysine 2225 participates in a covalent cross-link: Glycyl lysine isopeptide (Lys-Gly) (interchain with G-Cter in SUMO2). Acidic residues predominate over residues 2242–2255 (DLEDEDEEDEKTDD). Residues lysine 2317, lysine 2352, lysine 2396, and lysine 2471 each participate in a glycyl lysine isopeptide (Lys-Gly) (interchain with G-Cter in SUMO2) cross-link. Positions 2362-2413 (YYRRTHTANERRRRGEMRDLFEKLKITLGLLHSSKVSKSLILNRAFSEIQGL) constitute a bHLH domain. A Phosphoserine modification is found at serine 2480. The segment at 2515 to 2534 (KRDQATENASPSDTPHSSAN) is disordered. Residues 2520–2534 (TENASPSDTPHSSAN) show a composition bias toward polar residues. Glycyl lysine isopeptide (Lys-Gly) (interchain with G-Cter in SUMO2) cross-links involve residues lysine 2568 and lysine 2618. The span at 2629–2651 (SEASSLKDTERISSRGNHRDSRK) shows a compositional bias: basic and acidic residues. The interval 2629–2654 (SEASSLKDTERISSRGNHRDSRKALG) is disordered. A Glycyl lysine isopeptide (Lys-Gly) (interchain with G-Cter in SUMO2) cross-link involves residue lysine 2724. 2 positions are modified to phosphoserine: serine 2849 and serine 2860. The interval 2877–2917 (LVSHRKSSDGGQSTSGLPAEPESVSSPPILHMKTGPENSNT) is disordered. A Glycyl lysine isopeptide (Lys-Gly) (interchain with G-Cter in SUMO2) cross-link involves residue lysine 2979.

In terms of assembly, component of some MLL1/MLL complex, at least composed of the core components KMT2A/MLL1, ASH2L, HCFC1/HCF1, WDR5 and RBBP5, as well as the facultative components BACC1, CHD8, E2F6, HSP70, INO80C, KANSL1, LAS1L, MAX, MCRS1, MGA, MYST1/MOF, PELP1, PHF20, PRP31, RING2, RUVB1/TIP49A, RUVB2/TIP49B, SENP3, TAF1, TAF4, TAF6, TAF7, TAF9 and TEX10. Interacts with ZMYND11. Interacts with MAX. Requires heterodimerization with MAX for E-box binding. In terms of tissue distribution, highly expressed in germ cells and granulosa cells.

Its subcellular location is the nucleus. Functionally, functions as a dual-specificity transcription factor, regulating the expression of both MAX-network and T-box family target genes. Functions as a repressor or an activator. Binds to 5'-AATTTCACACCTAGGTGTGAAATT-3' core sequence and seems to regulate MYC-MAX target genes. Suppresses transcriptional activation by MYC and inhibits MYC-dependent cell transformation. Function activated by heterodimerization with MAX. This heterodimerization serves the dual function of both generating an E-box-binding heterodimer and simultaneously blocking interaction of a corepressor. In Mus musculus (Mouse), this protein is MAX gene-associated protein.